A 495-amino-acid chain; its full sequence is DNA double-strand break repair helicase HerA (495 aa).

ATP contacts are provided by residues arginine 142, 151–156, and 459–460; these read GSGKSN and KI.

It belongs to the HerA family. Interacts with Rad50 and Mre11.

The enzyme catalyses Couples ATP hydrolysis with the unwinding of duplex DNA at the replication fork by translocating in the 5'-3' direction. This creates two antiparallel DNA single strands (ssDNA). The leading ssDNA polymer is the template for DNA polymerase III holoenzyme which synthesizes a continuous strand.. The catalysed reaction is ATP + H2O = ADP + phosphate + H(+). It catalyses the reaction Couples ATP hydrolysis with the unwinding of duplex DNA by translocating in the 3'-5' direction.. ATPase activity is slightly stimulated by either circular single- or double-stranded (ds)DNA with a weak preference for dsDNA. Functionally, involved in DNA double-strand break (DSB) repair. Probably acts with NurA to stimulate resection of the 5' strand and produce the long 3' single-strand that is required for RadA loading. Has DNA-dependent ATPase activity and bidirectional DNA helicase activity. Loads on either a 3' or a 5' DNA tail for subsequent DNA unwinding; has no activity on blunt-end DNA. The chain is DNA double-strand break repair helicase HerA from Sulfolobus acidocaldarius (strain ATCC 33909 / DSM 639 / JCM 8929 / NBRC 15157 / NCIMB 11770).